Reading from the N-terminus, the 470-residue chain is Argininosuccinate lyase (470 aa).

Belongs to the lyase 1 family. Argininosuccinate lyase subfamily.

Its subcellular location is the cytoplasm. It carries out the reaction 2-(N(omega)-L-arginino)succinate = fumarate + L-arginine. The protein operates within amino-acid biosynthesis; L-arginine biosynthesis; L-arginine from L-ornithine and carbamoyl phosphate: step 3/3. The sequence is that of Argininosuccinate lyase from Mycolicibacterium gilvum (strain PYR-GCK) (Mycobacterium gilvum (strain PYR-GCK)).